The sequence spans 347 residues: Selenide, water dikinase (347 aa).

The active site involves cysteine 16. Residues lysine 19 and 47–49 each bind ATP; that span reads TRD. Aspartate 50 contributes to the Mg(2+) binding site. ATP is bound by residues aspartate 67, aspartate 90, and 138 to 140; that span reads GHS. A Mg(2+)-binding site is contributed by aspartate 90. A Mg(2+)-binding site is contributed by aspartate 226.

It belongs to the selenophosphate synthase 1 family. Class I subfamily. Homodimer. It depends on Mg(2+) as a cofactor.

The catalysed reaction is hydrogenselenide + ATP + H2O = selenophosphate + AMP + phosphate + 2 H(+). In terms of biological role, synthesizes selenophosphate from selenide and ATP. The sequence is that of Selenide, water dikinase from Photorhabdus laumondii subsp. laumondii (strain DSM 15139 / CIP 105565 / TT01) (Photorhabdus luminescens subsp. laumondii).